A 202-amino-acid chain; its full sequence is Protein GrpE (202 aa).

Positions 1 to 14 (MENTQENPTSQNPT) are enriched in polar residues. The disordered stretch occupies residues 1–58 (MENTQENPTSQNPTPADEAARQAAEAASGEPQDQARQPAAAAGEQPAQAQPAGAEAAL). Residues 21-58 (RQAAEAASGEPQDQARQPAAAAGEQPAQAQPAGAEAAL) show a composition bias toward low complexity.

Belongs to the GrpE family. Homodimer.

It is found in the cytoplasm. In terms of biological role, participates actively in the response to hyperosmotic and heat shock by preventing the aggregation of stress-denatured proteins, in association with DnaK and GrpE. It is the nucleotide exchange factor for DnaK and may function as a thermosensor. Unfolded proteins bind initially to DnaJ; upon interaction with the DnaJ-bound protein, DnaK hydrolyzes its bound ATP, resulting in the formation of a stable complex. GrpE releases ADP from DnaK; ATP binding to DnaK triggers the release of the substrate protein, thus completing the reaction cycle. Several rounds of ATP-dependent interactions between DnaJ, DnaK and GrpE are required for fully efficient folding. The sequence is that of Protein GrpE from Paraburkholderia phymatum (strain DSM 17167 / CIP 108236 / LMG 21445 / STM815) (Burkholderia phymatum).